The sequence spans 37 residues: Potassium channel toxin alpha-KTx 3.13 (37 aa).

Intrachain disulfides connect Cys-7-Cys-27, Cys-13-Cys-32, and Cys-17-Cys-34. Residue Lys-37 is modified to Lysine amide.

This sequence belongs to the short scorpion toxin superfamily. Potassium channel inhibitor family. Alpha-KTx 03 subfamily. As to expression, expressed by the venom gland.

The protein resides in the secreted. Blocks voltage-gated potassium channels Kv1.1/KCNA1 (IC(50)=203.15 pM), Kv1.2/KCNA2 (IC(50)=8.92 nM) from rat and human Kv1.3 KCNA3/KCNA3 (IC(50)=171 pM) potently. At 2 uM, also blocks Shaker IR and has a moderate effect on rat Kv1.6/KCNA6. The polypeptide is Potassium channel toxin alpha-KTx 3.13 (Mesobuthus eupeus (Lesser Asian scorpion)).